The primary structure comprises 384 residues: Lipoyl synthase 2, chloroplastic (384 aa).

A chloroplast-targeting transit peptide spans 1 to 48 (MAAYCSRVYHHHPVSPSTMQGSLARPSIHAGSASLTFRARPNSVSIVR). Cys108, Cys113, Cys119, Cys145, Cys149, Cys152, and Ser360 together coordinate [4Fe-4S] cluster. Residues 128-349 (GDGDGIATAT…KEYGESLGFL (222 aa)) enclose the Radical SAM core domain.

This sequence belongs to the radical SAM superfamily. Lipoyl synthase family. Requires [4Fe-4S] cluster as cofactor.

It is found in the plastid. The protein resides in the chloroplast. The catalysed reaction is [[Fe-S] cluster scaffold protein carrying a second [4Fe-4S](2+) cluster] + N(6)-octanoyl-L-lysyl-[protein] + 2 oxidized [2Fe-2S]-[ferredoxin] + 2 S-adenosyl-L-methionine + 4 H(+) = [[Fe-S] cluster scaffold protein] + N(6)-[(R)-dihydrolipoyl]-L-lysyl-[protein] + 4 Fe(3+) + 2 hydrogen sulfide + 2 5'-deoxyadenosine + 2 L-methionine + 2 reduced [2Fe-2S]-[ferredoxin]. The protein operates within protein modification; protein lipoylation via endogenous pathway; protein N(6)-(lipoyl)lysine from octanoyl-[acyl-carrier-protein]: step 2/2. In terms of biological role, catalyzes the radical-mediated insertion of two sulfur atoms into the C-6 and C-8 positions of the octanoyl moiety bound to the lipoyl domains of lipoate-dependent enzymes, thereby converting the octanoylated domains into lipoylated derivatives. The protein is Lipoyl synthase 2, chloroplastic of Oryza sativa subsp. indica (Rice).